Consider the following 354-residue polypeptide: ORC1-type DNA replication protein 9 (354 aa).

Residues 63–67 (TGKTC), tyrosine 195, and arginine 207 contribute to the ATP site.

This sequence belongs to the CDC6/cdc18 family.

Functionally, involved in regulation of DNA replication. The polypeptide is ORC1-type DNA replication protein 9 (orc9-1) (Halobacterium salinarum (strain ATCC 700922 / JCM 11081 / NRC-1) (Halobacterium halobium)).